The chain runs to 417 residues: Serine hydroxymethyltransferase (417 aa).

(6S)-5,6,7,8-tetrahydrofolate-binding positions include Leu117 and 121–123; that span reads GHL. Lys226 carries the N6-(pyridoxal phosphate)lysine modification.

It belongs to the SHMT family. Homodimer. Requires pyridoxal 5'-phosphate as cofactor.

It is found in the cytoplasm. The enzyme catalyses (6R)-5,10-methylene-5,6,7,8-tetrahydrofolate + glycine + H2O = (6S)-5,6,7,8-tetrahydrofolate + L-serine. Its pathway is one-carbon metabolism; tetrahydrofolate interconversion. The protein operates within amino-acid biosynthesis; glycine biosynthesis; glycine from L-serine: step 1/1. Catalyzes the reversible interconversion of serine and glycine with tetrahydrofolate (THF) serving as the one-carbon carrier. This reaction serves as the major source of one-carbon groups required for the biosynthesis of purines, thymidylate, methionine, and other important biomolecules. Also exhibits THF-independent aldolase activity toward beta-hydroxyamino acids, producing glycine and aldehydes, via a retro-aldol mechanism. In Shouchella clausii (strain KSM-K16) (Alkalihalobacillus clausii), this protein is Serine hydroxymethyltransferase.